Consider the following 224-residue polypeptide: Beta-casein (224 aa).

A signal peptide spans methionine 1 to alanine 15. Phosphoserine occurs at positions 30, 32, 33, and 34.

This sequence belongs to the beta-casein family. Mammary gland specific. Secreted in milk.

The protein localises to the secreted. Important role in determination of the surface properties of the casein micelles. This is Beta-casein (CSN2) from Bubalus bubalis (Domestic water buffalo).